A 4427-amino-acid polypeptide reads, in one-letter code: Dynein axonemal heavy chain 2 (4427 aa).

Residues 1–73 form a disordered region; sequence MSSKAEKKQR…AQSEESVEPE (73 aa). A stem region spans residues 1 to 1764; it reads MSSKAEKKQR…VIRQTNTQFQ (1764 aa). Residues 14-23 are compositionally biased toward polar residues; sequence RGSSQASWSG. Over residues 50–59 the composition is skewed to basic and acidic residues; it reads LPKEEPEPRL. The TPR 1 repeat unit spans residues 1404 to 1439; the sequence is EDNQVALSTMKASRFVKAFEKDVDHWERCLSLILEV. AAA regions lie at residues 1765-1986, 2046-2273, 2378-2625, and 2722-2974; these read YNYE…LLRY, ETVE…DNCK, RYPP…VFQG, and EYNL…LRRH. ATP is bound by residues 1803–1810, 2084–2091, and 2416–2423; these read GPAGTGKT, GCTGSGKT, and GPVGTGKT. A TPR 2 repeat occupies 2721 to 2754; sequence NEYNLSPSVVPMQLVLFREAIEHITRIVRVIGQP. An ATP-binding site is contributed by 2762-2769; it reads GIGGSGRQ. A stalk region spans residues 2989-3272; it reads YKKLLGEKRQ…EELRKKSEEM (284 aa). A coiled-coil region spans residues 3012 to 3049; the sequence is FKIDETREKVQVMSLELEDAKKKVAEFQKQCEEYLVII. The TPR 3 repeat unit spans residues 3072 to 3105; the sequence is VEEIKCQALADNAQKDLEEALPALEEAMRALESL. Coiled coils occupy residues 3216–3304 and 3523–3567; these read KRIR…EEDL and VRKE…GSLL. AAA stretches follow at residues 3358–3588 and 3804–4023; these read LCNP…EVTE and VTSF…LLSL. 2 TPR repeats span residues 4072–4104 and 4105–4140; these read STPF…LLPG and MDPP…QPQI.

The protein belongs to the dynein heavy chain family. Part of the axonemal inner dynein arm complex that consists of at least two heavy chains and a number of intermediate and light chains. Interacts with DNAI4. Expressed primarily in trachea and testis, 2 tissues containing axonemal structures. Also expressed in lung. Expressed in spermatozoa (at protein level).

The protein localises to the cytoplasm. It is found in the cytoskeleton. It localises to the cilium axoneme. Its subcellular location is the flagellum axoneme. In terms of biological role, as part of the axonemal inner dynein arm complex plays a central role in ciliary beat. Expressed in sperm flagellum, it is required for sperm motility. Dyneins are microtubule-based molecular motors possessing ATPase activities that can convert the chemical energy of ATP into relative sliding between adjacent microtubule doublets to generate ciliary bending. This chain is Dynein axonemal heavy chain 2, found in Homo sapiens (Human).